Here is a 579-residue protein sequence, read N- to C-terminus: Solute carrier family 15 member 5 (579 aa).

11 consecutive transmembrane segments (helical) span residues 77-97 (CQAAILNLCFIGTSILTPVFV), 110-130 (LVYICLFLHFLGTALLSVVAF), 154-174 (LFYVALLTICLGIGGVRAIVC), 191-211 (SFFNWFYWLMNLNATIVFLGI), 221-241 (ALVLLIPFMSMLMAVITLHMI), 304-324 (TFFLTLLPLFIFQLLYRMCIM), 343-363 (GFLLPIAVMNAISSLPLLILA), 386-406 (CIIAGNLFAALSVMIAGFFEI), 422-442 (VLTVSSMPCFYLILQYVLLGV), 472-492 (TLFNGFGCFTGALLVKLVYLI), and 509-529 (SFFFFLASLTLLNVLGFCSVS).

It belongs to the major facilitator superfamily. Proton-dependent oligopeptide transporter (POT/PTR) (TC 2.A.17) family.

Its subcellular location is the membrane. Proton oligopeptide cotransporter. This Homo sapiens (Human) protein is Solute carrier family 15 member 5 (SLC15A5).